The chain runs to 496 residues: Catalase-A (496 aa).

Catalysis depends on residues histidine 54 and asparagine 128. Tyrosine 338 serves as a coordination point for heme. A Microbody targeting signal motif is present at residues 494–496 (SNL).

It belongs to the catalase family. Heme serves as cofactor.

Its subcellular location is the peroxisome matrix. The enzyme catalyses 2 H2O2 = O2 + 2 H2O. In terms of biological role, catalyzes the degradation of hydrogen peroxide (H(2)O(2)) generated by peroxisomal oxidases to water and oxygen, thereby protecting cells from the toxic effects of hydrogen peroxide. This chain is Catalase-A (catA), found in Dictyostelium discoideum (Social amoeba).